Consider the following 447-residue polypeptide: Serine/threonine-protein phosphatase 2A 55 kDa regulatory subunit B delta isoform (447 aa).

WD repeat units lie at residues 26–65 (AEAD…KSRP), 91–132 (EIEE…KRVE), 175–213 (AHTY…RSFN), 224–264 (ELTE…LCDR), 283–321 (EIIS…RPVE), 338–379 (ENDC…DITL), and 414–447 (DFNK…DKVN).

It belongs to the phosphatase 2A regulatory subunit B family. In terms of assembly, PP2A consists of a common heterodimeric core enzyme, composed of a 36 kDa catalytic subunit (subunit C) and a 65 kDa constant regulatory subunit (PR65 or subunit A), that associates with a variety of regulatory subunits. Proteins that associate with the core dimer include three families of regulatory subunits B (the R2/B/PR55/B55, R3/B''/PR72/PR130/PR59 and R5/B'/B56 families), the 48 kDa variable regulatory subunit, viral proteins, and cell signaling molecules. Interacts with ensa (when phosphorylated at 'Ser-67') and arpp19 (when phosphorylated at 'Ser-67'), leading to inhibit PP2A activity.

It localises to the cytoplasm. Substrate-recognition subunit of protein phosphatase 2A (PP2A) that plays a key role in cell cycle by controlling mitosis entry and exit. The activity of PP2A complexes containing ppp2r2d (PR55-delta) fluctuate during the cell cycle: the activity is high in interphase and low in mitosis. During mitosis, activity of PP2A is inhibited via interaction with phosphorylated ensa and arpp19 inhibitors. PP2A complexes containing ppp2r2d (PR55-delta) also regulate the activity of TGF-beta/Activin/Nodal signaling by restricting receptor activity. Within the PP2A complexes, the B regulatory subunits modulate substrate selectivity and catalytic activity, and may also direct the localization of the catalytic enzyme to a particular subcellular compartment. In Xenopus tropicalis (Western clawed frog), this protein is Serine/threonine-protein phosphatase 2A 55 kDa regulatory subunit B delta isoform (ppp2r2d).